The primary structure comprises 394 residues: Elongation factor Tu (394 aa).

The region spanning Lys10 to Glu204 is the tr-type G domain. The G1 stretch occupies residues Gly19–Thr26. Gly19–Thr26 contributes to the GTP binding site. Thr26 serves as a coordination point for Mg(2+). Positions Gly60–Asn64 are G2. The G3 stretch occupies residues Asp81–Gly84. GTP contacts are provided by residues Asp81 to His85 and Asn136 to Asp139. The interval Asn136–Asp139 is G4. The segment at Ser174–Leu176 is G5.

This sequence belongs to the TRAFAC class translation factor GTPase superfamily. Classic translation factor GTPase family. EF-Tu/EF-1A subfamily. Monomer.

The protein localises to the cytoplasm. The enzyme catalyses GTP + H2O = GDP + phosphate + H(+). Its function is as follows. GTP hydrolase that promotes the GTP-dependent binding of aminoacyl-tRNA to the A-site of ribosomes during protein biosynthesis. In Pectobacterium atrosepticum (strain SCRI 1043 / ATCC BAA-672) (Erwinia carotovora subsp. atroseptica), this protein is Elongation factor Tu.